Here is an 88-residue protein sequence, read N- to C-terminus: Antitoxin VapB3 (88 aa).

Functionally, antitoxin component of a type II toxin-antitoxin (TA) system. The protein is Antitoxin VapB3 (vapB3) of Mycobacterium tuberculosis (strain CDC 1551 / Oshkosh).